The following is a 117-amino-acid chain: Immunoglobulin kappa variable 1D-12 (117 aa).

Residues Met-1 to Cys-22 form the signal peptide. Positions Asp-23–Cys-45 are framework-1. In terms of domain architecture, Ig-like spans Ile-24–Pro-117. Cys-45 and Cys-110 are oxidised to a cystine. Positions Arg-46–Ala-56 are complementarity-determining-1. The segment at Trp-57–Tyr-71 is framework-2. The tract at residues Ala-72–Ser-78 is complementarity-determining-2. Positions Gly-79–Cys-110 are framework-3. The tract at residues Gln-111–Pro-117 is complementarity-determining-3.

As to quaternary structure, immunoglobulins are composed of two identical heavy chains and two identical light chains; disulfide-linked.

Its subcellular location is the secreted. The protein resides in the cell membrane. Functionally, v region of the variable domain of immunoglobulin light chains that participates in the antigen recognition. Immunoglobulins, also known as antibodies, are membrane-bound or secreted glycoproteins produced by B lymphocytes. In the recognition phase of humoral immunity, the membrane-bound immunoglobulins serve as receptors which, upon binding of a specific antigen, trigger the clonal expansion and differentiation of B lymphocytes into immunoglobulins-secreting plasma cells. Secreted immunoglobulins mediate the effector phase of humoral immunity, which results in the elimination of bound antigens. The antigen binding site is formed by the variable domain of one heavy chain, together with that of its associated light chain. Thus, each immunoglobulin has two antigen binding sites with remarkable affinity for a particular antigen. The variable domains are assembled by a process called V-(D)-J rearrangement and can then be subjected to somatic hypermutations which, after exposure to antigen and selection, allow affinity maturation for a particular antigen. The polypeptide is Immunoglobulin kappa variable 1D-12 (Homo sapiens (Human)).